The sequence spans 714 residues: Structure-specific endonuclease subunit SLX4 1 (714 aa).

Composition is skewed to basic and acidic residues over residues 1–14 and 24–34; these read MSPE…EDNL and IHEETLAEESH. 2 disordered regions span residues 1–116 and 337–369; these read MSPE…QGSI and DSSG…KTPQ. Low complexity predominate over residues 36–46; that stretch reads QSIQRSISRLS. Residues 79-92 show a composition bias toward basic residues; that stretch reads KTKKRKLKVSKPRK.

This sequence belongs to the SLX4 family. In terms of assembly, forms a heterodimer with SLX1. Post-translationally, phosphorylated in response to DNA damage.

Its subcellular location is the nucleus. In terms of biological role, regulatory subunit of the SLX1-SLX4 structure-specific endonuclease that resolves DNA secondary structures generated during DNA repair and recombination. Has endonuclease activity towards branched DNA substrates, introducing single-strand cuts in duplex DNA close to junctions with ss-DNA. This chain is Structure-specific endonuclease subunit SLX4 1, found in Candida tropicalis (strain ATCC MYA-3404 / T1) (Yeast).